Reading from the N-terminus, the 267-residue chain is Ribosomal RNA large subunit methyltransferase E (267 aa).

Positions 50, 52, 68, 84, and 109 each coordinate S-adenosyl-L-methionine. The active-site Proton acceptor is the Lys149. Residues 196–255 (PLKIDDKFDVTIKKIGAKGNGIAFVEDFVVFMQDEVKKGENVRIKIVDVKPEFAFAIVIG) form the TRAM domain.

The protein belongs to the class I-like SAM-binding methyltransferase superfamily. RNA methyltransferase RlmE family.

Its subcellular location is the cytoplasm. It catalyses the reaction uridine(2552) in 23S rRNA + S-adenosyl-L-methionine = 2'-O-methyluridine(2552) in 23S rRNA + S-adenosyl-L-homocysteine + H(+). In terms of biological role, specifically methylates the uridine in position 2552 of 23S rRNA at the 2'-O position of the ribose in the fully assembled 50S ribosomal subunit. This is Ribosomal RNA large subunit methyltransferase E from Methanococcoides burtonii (strain DSM 6242 / NBRC 107633 / OCM 468 / ACE-M).